Reading from the N-terminus, the 500-residue chain is Glycerol kinase (500 aa).

Position 13 (Thr13) interacts with ADP. 3 residues coordinate ATP: Thr13, Thr14, and Ser15. Position 13 (Thr13) interacts with sn-glycerol 3-phosphate. Arg17 contacts ADP. Sn-glycerol 3-phosphate is bound by residues Arg83, Glu84, Tyr135, and Asp244. Arg83, Glu84, Tyr135, Asp244, and Gln245 together coordinate glycerol. The ADP site is built by Thr266 and Gly309. Thr266, Gly309, Gln313, and Gly410 together coordinate ATP. ADP contacts are provided by Gly410 and Asn414.

The protein belongs to the FGGY kinase family.

The enzyme catalyses glycerol + ATP = sn-glycerol 3-phosphate + ADP + H(+). It participates in polyol metabolism; glycerol degradation via glycerol kinase pathway; sn-glycerol 3-phosphate from glycerol: step 1/1. Its activity is regulated as follows. Inhibited by fructose 1,6-bisphosphate (FBP). Key enzyme in the regulation of glycerol uptake and metabolism. Catalyzes the phosphorylation of glycerol to yield sn-glycerol 3-phosphate. The protein is Glycerol kinase of Burkholderia vietnamiensis (strain G4 / LMG 22486) (Burkholderia cepacia (strain R1808)).